A 161-amino-acid chain; its full sequence is Peroxynitrite isomerase 2 (161 aa).

The GXWXGXG motif lies at Gly-17–Gly-23. His-152 is a binding site for heme b.

The protein belongs to the nitrobindin family. In terms of assembly, homodimer. It depends on heme b as a cofactor.

It carries out the reaction peroxynitrite = nitrate. It functions in the pathway nitrogen metabolism. Heme-binding protein able to scavenge peroxynitrite and to protect free L-tyrosine against peroxynitrite-mediated nitration, by acting as a peroxynitrite isomerase that converts peroxynitrite to nitrate. Therefore, this protein likely plays a role in peroxynitrite sensing and in the detoxification of reactive nitrogen and oxygen species (RNS and ROS, respectively). Is able to bind nitric oxide (NO) in vitro, but may act as a sensor of peroxynitrite levels in vivo. The polypeptide is Peroxynitrite isomerase 2 (Mycobacterium ulcerans (strain Agy99)).